A 1064-amino-acid polypeptide reads, in one-letter code: Lysine-specific demethylase 4A (1064 aa).

A2 is modified (N-acetylalanine). The JmjN domain occupies 14 to 56; sequence IMTFYPTMEEFRNFSRYIAYIESQGAHRAGLAKVVPPKEWKPR. Y132 contacts 2-oxoglutarate. The region spanning 142 to 308 is the JmjC domain; the sequence is EQHVDEWNIG…YGKQAVLCSC (167 aa). H188 and E190 together coordinate Fe cation. The 2-oxoglutarate site is built by N198 and K206. Zn(2+) is bound by residues C234 and H240. Residue K241 participates in 2-oxoglutarate binding. A Fe cation-binding site is contributed by H276. Zn(2+) is bound by residues C306 and C308. Disordered stretches follow at residues 354–384, 434–489, 502–537, 549–573, and 590–643; these read LKDS…EEGD, LAPV…LDLS, SGSK…QGQE, RGDG…SISE, and NKKT…LSQL. A compositionally biased stretch (acidic residues) spans 368–382; that stretch reads ECPEEDVEAADQGEE. Over residues 460-472 the composition is skewed to basic and acidic residues; the sequence is TEVKFEELKNVKL. The span at 473–482 shows a compositional bias: acidic residues; that stretch reads EEEDEEDEPE. Positions 509-525 are enriched in low complexity; the sequence is SSSLGSTSSQDSVSSDS. The residue at position 523 (S523) is a Phosphoserine. The span at 528–537 shows a compositional bias: polar residues; the sequence is AESVSCQGQE. Positions 593-608 are enriched in basic residues; it reads TKGRRQPLSKLPRHHP. The interval 597–638 is interaction with NCOR1; that stretch reads RQPLSKLPRHHPLVLQECGSDDETSEQLTPEEEAEETEAWAK. Over residues 615-634 the composition is skewed to acidic residues; it reads GSDDETSEQLTPEEEAEETE. Residues 709–767 form a PHD-type 1 zinc finger; the sequence is MCFTTTGCSTDINLSTPYLEEDGTSMLVSCKKCSVRVHASCYGVPPAKASEEWMCSRCS. The C2HC pre-PHD-type zinc-finger motif lies at 772-805; it reads EEDCCLCSLRGGALQRANDDRWVHVSCAVAILEA. The PHD-type 2 zinc finger occupies 828–885; sequence LKCVFCKKRRKRNAGCCVQCSHGRCPTAFHVSCAQAAGVMMQPDDWPFVVFITCFRHK. 2 consecutive Tudor domains span residues 897-954 and 955-1011; these read LSIT…CLQL and GPPA…EELP.

The protein belongs to the JHDM3 histone demethylase family. Interacts with histone deacetylase proteins HDAC1, HDAC2 and HDAC3. Interacts with RB and NCOR1. Interacts with VRK1. Fe(2+) serves as cofactor. Ubiquitinated by RNF8 and RNF168, leading to its degradation. Degradation promotes accessibility of H4K20me2 mark for DNA repair protein TP53BP1, which is then recruited. Also ubiquitinated by the SCF(FBXO22) complex; leading to proteasomal degradation. In terms of tissue distribution, widely expressed.

It is found in the nucleus. It carries out the reaction N(6),N(6),N(6)-trimethyl-L-lysyl(9)-[histone H3] + 2 2-oxoglutarate + 2 O2 = N(6)-methyl-L-lysyl(9)-[histone H3] + 2 formaldehyde + 2 succinate + 2 CO2. The catalysed reaction is N(6),N(6),N(6)-trimethyl-L-lysyl(36)-[histone H3] + 2 2-oxoglutarate + 2 O2 = N(6)-methyl-L-lysyl(36)-[histone H3] + 2 formaldehyde + 2 succinate + 2 CO2. In terms of biological role, histone demethylase that specifically demethylates 'Lys-9' and 'Lys-36' residues of histone H3, thereby playing a central role in histone code. Does not demethylate histone H3 'Lys-4', H3 'Lys-27' nor H4 'Lys-20'. Demethylates trimethylated H3 'Lys-9' and H3 'Lys-36' residue, while it has no activity on mono- and dimethylated residues. Demethylation of Lys residue generates formaldehyde and succinate. Participates in transcriptional repression of ASCL2 and E2F-responsive promoters via the recruitment of histone deacetylases and NCOR1, respectively. This chain is Lysine-specific demethylase 4A (Kdm4a), found in Mus musculus (Mouse).